Reading from the N-terminus, the 391-residue chain is Somatostatin receptor type 1 (391 aa).

Residues 1–50 (MFPNGTAPSPTSSPSSSPGGCGEGVCSRGPGSGAADGMEEPGRNSSQNGT) are disordered. The Extracellular segment spans residues 1–56 (MFPNGTAPSPTSSPSSSPGGCGEGVCSRGPGSGAADGMEEPGRNSSQNGTLSEGQG). An N-linked (GlcNAc...) asparagine glycan is attached at Asn-4. Residues 8–18 (PSPTSSPSSSP) are compositionally biased toward low complexity. 2 N-linked (GlcNAc...) asparagine glycosylation sites follow: Asn-44 and Asn-48. The helical transmembrane segment at 57-84 (SAILISFIYSVVCLVGLCGNSMVIYVIL) threads the bilayer. The Cytoplasmic portion of the chain corresponds to 85–94 (RYAKMKTATN). The chain crosses the membrane as a helical span at residues 95–120 (IYILNLAIADELLMLSVPFLVTSTLL). The Extracellular portion of the chain corresponds to 121 to 131 (RHWPFGALLCR). The cysteines at positions 130 and 208 are disulfide-linked. The helical transmembrane segment at 132-153 (LVLSVDAVNMFTSIYCLTVLSV) threads the bilayer. At 154–175 (DRYVAVVHPIKAARYRRPTVAK) the chain is on the cytoplasmic side. Residues 176-196 (VVNLGVWVLSLLVILPIVVFS) form a helical membrane-spanning segment. Topologically, residues 197–219 (RTAANSDGTVACNMLMPEPAQRW) are extracellular. A helical transmembrane segment spans residues 220-244 (LVGFVLYTFLMGFLLPVGAICLCYV). The Cytoplasmic segment spans residues 245 to 270 (LIIAKMRMVALKAGWQQRKRSERKIT). Residues 271 to 296 (LMVMMVVMVFVICWMPFYVVQLVNVF) form a helical membrane-spanning segment. At 297–303 (AEQDDAT) the chain is on the extracellular side. A helical transmembrane segment spans residues 304 to 327 (VSQLSVILGYANSCANPILYGFLS). The Cytoplasmic portion of the chain corresponds to 328–391 (DNFKRSFQRI…GTCASRISTL (64 aa)). Residue Cys-339 is the site of S-palmitoyl cysteine attachment.

Belongs to the G-protein coupled receptor 1 family. In terms of tissue distribution, brain, pituitary, islet, jejunum, stomach, heart, spleen.

The protein resides in the cell membrane. Receptor for somatostatin with higher affinity for somatostatin-14 than -28. This receptor is coupled to phosphotyrosine phosphatase and Na(+)/H(+) exchanger via pertussis toxin insensitive G proteins. The chain is Somatostatin receptor type 1 (Sstr1) from Rattus norvegicus (Rat).